The following is a 53-amino-acid chain: Rho GTPase-activating protein 6 (53 aa).

The protein resides in the cytoplasm. Functionally, GTPase activator for the Rho-type GTPases by converting them to an inactive GDP-bound state. Could regulate the interactions of signaling molecules with the actin cytoskeleton. Promotes continuous elongation of cytoplasmic processes during cell motility and simultaneous retraction of the cell body changing the cell morphology. The protein is Rho GTPase-activating protein 6 (arhgap6) of Takifugu rubripes (Japanese pufferfish).